We begin with the raw amino-acid sequence, 1203 residues long: Potassium/sodium hyperpolarization-activated cyclic nucleotide-gated channel 4 (1203 aa).

The disordered stretch occupies residues 1–182; that stretch reads MDKLPPSMRK…QPASASCEQP (182 aa). The Cytoplasmic segment spans residues 1 to 263; it reads MDKLPPSMRK…IIHPYSDFRF (263 aa). A compositionally biased stretch (acidic residues) spans 26–36; that stretch reads MDEEEDAEEEG. The segment covering 105 to 117 has biased composition (gly residues); the sequence is SRGGGSGGTGSGS. The segment covering 121–133 has biased composition (basic and acidic residues); it reads HLHDSAEERRLIA. Residue Ser-138 is modified to Phosphoserine. A compositionally biased stretch (pro residues) spans 163–174; that stretch reads ASPPPPQQPPQP. The segment at 209–260 is involved in subunit assembly; that stretch reads GQAGFMQRQFGAMLQPGVNKFSLRMFGSQKAVEREQERVKSAGFWIIHPYSD. The helical transmembrane segment at 264-286 threads the bilayer; that stretch reads YWDLTMLLLMVGNLIIIPVGITF. Topologically, residues 287 to 293 are extracellular; sequence FKDENTT. The helical transmembrane segment at 294–314 threads the bilayer; it reads PWIVFNVVSDTFFLIDLVLNF. Topologically, residues 315 to 336 are cytoplasmic; that stretch reads RTGIVVEDNTEIILDPQRIKMK. The chain crosses the membrane as a helical span at residues 337–359; it reads YLKSWFMVDFISSIPVDYIFLIV. Residues 360–378 lie on the Extracellular side of the membrane; sequence ETRIDSEVYKTARALRIVR. The chain crosses the membrane as a helical; Voltage-sensor span at residues 379–399; it reads FTKILSLLRLLRLSRLIRYIH. The Cytoplasmic segment spans residues 400-413; sequence QWEEIFHMTYDLAS. The chain crosses the membrane as a helical span at residues 414 to 436; the sequence is AVVRIVNLIGMMLLLCHWDGCLQ. Topologically, residues 437 to 464 are extracellular; that stretch reads FLVPMLQDFPDDCWVSINNMVNNSWGKQ. The N-linked (GlcNAc...) asparagine glycan is linked to Asn-458. The segment at residues 465-486 is an intramembrane region (pore-forming); that stretch reads YSYALFKAMSHMLCIGYGRQAP. Residues 487–491 lie on the Extracellular side of the membrane; it reads VGMSD. A helical transmembrane segment spans residues 492–517; sequence VWLTMLSMIVGATCYAMFIGHATALI. Residues 518-1203 lie on the Cytoplasmic side of the membrane; the sequence is QSLDSSRRQY…PVRSKLPSNL (686 aa). Tyr-559, Lys-562, Phe-564, and Glu-566 together coordinate 3',5'-cyclic GMP. 7 residues coordinate 3',5'-cyclic AMP: Gly-659, Glu-660, Cys-662, Arg-669, Thr-670, Val-673, and Arg-710. 3 disordered regions span residues 836–856, 870–897, and 918–1203; these read ALGS…SSSS, GLSP…TPSA, and LSSS…PSNL. Low complexity-rich tracts occupy residues 918–941 and 966–986; these read LSSS…AAQP and RSPS…SLGL. A compositionally biased stretch (pro residues) spans 995–1004; the sequence is ETPPRQPEPP. Residues 1005 to 1028 are compositionally biased toward low complexity; sequence SLVAGASGGASPVGFTPRGGLSPP. The segment covering 1029-1042 has biased composition (pro residues); that stretch reads GHSPGPPRTFPSAP. Positions 1045 to 1056 are enriched in low complexity; that stretch reads ASGSHGSLLLPP. A phosphoserine mark is found at Ser-1105 and Ser-1108. Over residues 1122–1137 the composition is skewed to gly residues; that stretch reads AGGGSGGSGSSGGLGP.

The protein belongs to the potassium channel HCN family. In terms of assembly, homotetramer. The channel assemble into homotetramers or heteromeric complexes that contains of four pore-forming subunits. Interacts with PEX5L with a 4:4 HCN4:PEX5L stoichiometry; reduces the effects of cAMP on the voltage-dependence and rate of activation. Interacts with IRAG1; regulates HCN4 channel activity. Interacts with IRAG2; regulates HCN4 channel activity. In terms of processing, S-palmitoylated. Highly expressed in thalamus, testis and in heart, both in ventricle and atrium. Detected at much lower levels in amygdala, substantia nigra, cerebellum and hippocampus.

Its subcellular location is the cell membrane. It carries out the reaction K(+)(in) = K(+)(out). The catalysed reaction is Na(+)(in) = Na(+)(out). Activated by cAMP and to a lesser extent by cGMP and cCMP. cAMP binding causes a conformation change that leads to the assembly of an active tetramer and channel opening. Binding of cAMP removes a tonic inhibition conferred by cyclic nucleotide-binding domain (CNBD) on channel opening. Cyclic dinucleotides can modulate HCN4 channel; cyclic dinucleotides acting as potent antagonists of cAMP. Inhibited by extracellular Cs(+) ions. Auxiliary subunits can also regulate HCN4 channel. IRAG1 causes a gain-of-function by shifting HCN4 activation to more depolarized membrane potentials in the absence of cAMP. In contrast, IRAG2 causes a loss-of-function by inhibiting cAMP-dependent potentiation of HCN4 activation. Its function is as follows. Hyperpolarization-activated ion channel that are permeable to Na(+) and K(+) ions with very slow activation and inactivation. Exhibits higher selectivity for K(+) over Na(+) ions. Contributes to the native pacemaker currents in heart (If) that regulate the rhythm of heart beat. Contributes to the native pacemaker currents in neurons (Ih). May mediate responses to sour stimuli. This is Potassium/sodium hyperpolarization-activated cyclic nucleotide-gated channel 4 from Homo sapiens (Human).